Reading from the N-terminus, the 152-residue chain is Endoribonuclease YbeY (152 aa).

Histidine 113, histidine 117, and histidine 123 together coordinate Zn(2+).

It belongs to the endoribonuclease YbeY family. The cofactor is Zn(2+).

The protein localises to the cytoplasm. Functionally, single strand-specific metallo-endoribonuclease involved in late-stage 70S ribosome quality control and in maturation of the 3' terminus of the 16S rRNA. The polypeptide is Endoribonuclease YbeY (Wolbachia pipientis subsp. Culex pipiens (strain wPip)).